The sequence spans 397 residues: DNA excision repair protein ERCC-8 (397 aa).

WD repeat units lie at residues 41–81 (IHCS…RQPY), 97–137 (VHKY…IADV), 184–224 (GHRQ…GCLI), 243–282 (AHNGKVNGLCFTSDGLHLLTVGTDNRMRLWNSSNGENTLV), and 332–371 (GHYKSVDCCVFQSNFQELYSGSRDCNILAWVPSLCESVPD). Positions 370 to 397 (PDDDDETSTRSQLNPAFEDAWSSSDEEG) are disordered. Phosphoserine occurs at positions 391, 392, and 393.

As to quaternary structure, part of the CSA complex (also named DCX(ERCC8) complex), a DCX E3 ubiquitin-protein ligase complex containing ERCC8, RBX1, DDB1 and CUL4A; the CSA complex interacts with RNA polymerase II; upon UV irradiation it interacts with the COP9 signalosome and preferentially with the hyperphosphorylated form of RNA polymerase II. Interacts with ERCC6/CSB (via CIM motif); promoting recruitment to lesion-stalled RNA polymerase II (Pol II). Interacts with KIAA1530/UVSSA. Interacts with a subunit of RNA polymerase II TFIIH.

It localises to the nucleus. The protein localises to the chromosome. Its subcellular location is the nucleus matrix. The protein operates within protein modification; protein ubiquitination. In terms of biological role, substrate-recognition component of the CSA complex, a DCX (DDB1-CUL4-X-box) E3 ubiquitin-protein ligase complex, involved in transcription-coupled nucleotide excision repair (TC-NER), a process during which RNA polymerase II-blocking lesions are rapidly removed from the transcribed strand of active genes. Following recruitment to lesion-stalled RNA polymerase II (Pol II), the CSA complex mediates ubiquitination of Pol II subunit POLR2A/RPB1 at 'Lys-1268', a critical TC-NER checkpoint, governing RNA Pol II stability and initiating DNA damage excision by TFIIH recruitment. The CSA complex also promotes the ubiquitination and subsequent proteasomal degradation of ERCC6/CSB in a UV-dependent manner; ERCC6 degradation is essential for the recovery of RNA synthesis after transcription-coupled repair. Also plays a role in DNA double-strand breaks (DSSBs) repair by non-homologous end joining (NHEJ). The sequence is that of DNA excision repair protein ERCC-8 (ERCC8) from Bos taurus (Bovine).